We begin with the raw amino-acid sequence, 260 residues long: Indole-3-glycerol phosphate synthase (260 aa).

This sequence belongs to the TrpC family.

It catalyses the reaction 1-(2-carboxyphenylamino)-1-deoxy-D-ribulose 5-phosphate + H(+) = (1S,2R)-1-C-(indol-3-yl)glycerol 3-phosphate + CO2 + H2O. Its pathway is amino-acid biosynthesis; L-tryptophan biosynthesis; L-tryptophan from chorismate: step 4/5. This chain is Indole-3-glycerol phosphate synthase, found in Staphylococcus saprophyticus subsp. saprophyticus (strain ATCC 15305 / DSM 20229 / NCIMB 8711 / NCTC 7292 / S-41).